The primary structure comprises 318 residues: Ribosomal RNA small subunit methyltransferase H (318 aa).

Residues G34–Y36, D52, F79, D100, and Q107 contribute to the S-adenosyl-L-methionine site. The tract at residues G286 to S318 is disordered. A compositionally biased stretch (low complexity) spans L303 to S318.

The protein belongs to the methyltransferase superfamily. RsmH family.

The protein resides in the cytoplasm. The catalysed reaction is cytidine(1402) in 16S rRNA + S-adenosyl-L-methionine = N(4)-methylcytidine(1402) in 16S rRNA + S-adenosyl-L-homocysteine + H(+). Functionally, specifically methylates the N4 position of cytidine in position 1402 (C1402) of 16S rRNA. The polypeptide is Ribosomal RNA small subunit methyltransferase H (Paramagnetospirillum magneticum (strain ATCC 700264 / AMB-1) (Magnetospirillum magneticum)).